A 426-amino-acid polypeptide reads, in one-letter code: Ankyrin repeat-containing protein BDA1 (426 aa).

ANK repeat units lie at residues 1–29, 36–65, 70–99, 104–134, 138–167, and 182–212; these read MDSK…DILQ, IIHT…SFAK, YGLS…SLVR, GGMT…SIKD, NGET…KMRD, and GGNT…DRNI. The next 4 membrane-spanning stretches (helical) occupy residues 288–308, 329–349, 355–375, and 380–400; these read ALLV…AQLL, WGCN…LLPV, WWYF…MYMM, and FFFL…VLYV.

Its subcellular location is the cell membrane. In terms of biological role, involved in plant defense. Required for basal resistance against Pseudomonas syringae pv. tomato DC3000. Required for resistance against nonpathogenic bacteria. May be involved in signaling components that function downstream of SNC2 and upstream of NPR1 and WRKY70 to regulate defense responses. The chain is Ankyrin repeat-containing protein BDA1 from Arabidopsis thaliana (Mouse-ear cress).